A 319-amino-acid polypeptide reads, in one-letter code: Ankyrin repeat domain-containing protein 1 (319 aa).

Positions 55–89 (LGEEQRKSEKVREAELKKKKLEQRSKLENLEDLEI) form a coiled coil. 5 ANK repeats span residues 152-181 (YKRT…QIEF), 185-214 (LEST…KISA), 218-247 (LLST…DLNA), 251-280 (EGDT…DLNV), and 284-315 (AGKT…KNSR).

In terms of assembly, interacts with TTN/titin. Interacts with YBX1. Expressed in heart, cardiac muscle.

The protein localises to the nucleus. May play an important role in endothelial cell activation. May act as a nuclear transcription factor that negatively regulates the expression of cardiac genes. This is Ankyrin repeat domain-containing protein 1 (Ankrd1) from Rattus norvegicus (Rat).